The following is a 546-amino-acid chain: MALSAAASTLARLGYYEKLAGILGIIGLVLLFWQRTRQPFYPDLPLAGETPHRRWFSLRTRFRYYTDCASLFNEAYHTVRFHASTSSSSTLSRLNAHASQYTKHGKGVLLPSVGVHTAVVMPESALDWAMSQPDSALSITHAFADLNQTRYSLGDARYWRDPWQLTLVKAHLAAVTPALVPQLNDELADALAKRLGTDTDSWREMELETTLRRVVAQTLSRLIVGPELCRDEGYLDLAYKVVLGVMTTIFATLPYPDLVRAVTGPLASWHTQRRISRIQRHLEPLYRERLAILRSAKEDQPPDLLMAMMRFAQKKRPEELADPAIIARRVCAANFVAMHQTTIVLTNIILHVLGSDAEFSTIAALRSEAAAHLLSSERITKDAFAQMKVADSVAREATRLNFPLGGRASPRTVMRDGLVSPEGIRLQRGTTVSWLAGCAQLDPEAFPEPRRFDPFRFSRGDGDGEGERDTFVKTSARYLPWGHGKHACPGRFVVDYVVKMALAQLVTKYDLAWPEDYGGKQPPSVWLAELSVPPPRARIMVRRRKV.

A helical transmembrane segment spans residues 13 to 33 (LGYYEKLAGILGIIGLVLLFW). N147 carries N-linked (GlcNAc...) asparagine glycosylation. C488 is a binding site for heme.

It belongs to the cytochrome P450 family. Heme is required as a cofactor.

It localises to the membrane. It functions in the pathway secondary metabolite biosynthesis. Functionally, cytochrome P450 monooxygenase; part of the gene cluster that mediates the biosynthesis of fumosorinone, a 2-pyridone alkaloid that acts as an inhibitor of protein tyrosine phosphatase 1B which is implicated asa negative regulator of insulin receptor signaling and a potential drug target for the treatment of type II diabetes and other associated metabolic syndromes. The polyketide-amino acid backbone of fumosorinone is first assembled by the PKS-NRPS hybrid fumoS. The PKS modules condense one acetyl-CoA starter unit with 7 malonyl-CoA units, programmed C-methylations occurring after the first 3 and the sixth extensions, and cycles of full reduction occurring after the first 2 extensions. Because fumoS lacks a designated enoyl reductase (ER) domain, the required activity is provided the enoyl reductase fumoC. Upon formation of the polyketide backbone on the thiotemplate, the polyketide is transferred to the NRPS module and linked to tyrosine to produce the acyltetramic acid intermediate called prefumosorinone A. The cytochrome P450 monooxygenase fumoA then probably catalyzes an unprecedented oxidative ring expansion of prefumosorinone A to form prefumosorinone B which contains the 2-pyridone core of fumosorinone. The cytochrome P450 monooxygenase fumoB might hydroxylate the nitrogen of prefumosorinone B, but not the acyltetramic acid prefumosorinone A, to form fumosorinone. The chain is Cytochrome P450 monooxygenase fumoB from Cordyceps fumosorosea (strain ARSEF 2679) (Isaria fumosorosea).